We begin with the raw amino-acid sequence, 393 residues long: Putative bacilysin exporter BacE (393 aa).

A run of 10 helical transmembrane segments spans residues 11–31 (LLFG…ALLI), 43–63 (SGVI…GVLV), 69–89 (VKIM…LTFL), 92–112 (GEYP…GVFF), 133–155 (LFAK…FLLG), 160–177 (LAVA…FFIS), 215–235 (MFTM…FPIV), 244–264 (IGNF…AALV), 287–307 (ALFL…LFFI), and 353–373 (IVDA…LFLH).

Belongs to the major facilitator superfamily.

It localises to the cell membrane. In terms of biological role, part of the bacilysin biosynthesis operon. May be involved in self-resistance to bacilysin by permitting efflux of this antibiotic. The chain is Putative bacilysin exporter BacE (bacE) from Bacillus amyloliquefaciens (Bacillus velezensis).